Here is a 369-residue protein sequence, read N- to C-terminus: MLLDMDLGVLLPSLQSVYVLVFYFVYLAVAGEILPGKVIRGVLLSDGSQLRYRCNGLLALILLVAILGICAKLGIVSPLVVADRGLELLSATFIFCVLVTLALYVTGRSSSNKGSSLKPHVSGNLVHDWWFGIQLNPQFMSIDLKFFFVRAGMMGWLLINLSILAKSVQDGSLSQSMILYQIFCALYILDYFVHEEYMTSTWDIIAERLGFMLVFGDLLWIPFTFSIQGWWLLHNKVELTVPAIVVNCLVFLIGYMVFRGANKQKHIFKKNPKTPIWGKPPVVVGGKLLVSGYWGIARHCNYLGDLMLALSFSLPCGISSPVPYFYPIYLLILLIWRERRDEVRCAEKYKEIWAEYLRLVPWRILPYVY.

Helical transmembrane passes span 15-34 (QSVY…GEIL), 54-76 (CNGL…LGIV), 86-105 (LELL…ALYV), 146-168 (FFFV…AKSV), 178-195 (ILYQ…FVHE), 208-230 (RLGF…IQGW), and 240-262 (TVPA…RGAN). NADP(+) contacts are provided by residues lysine 265, lysine 269, leucine 289, tryptophan 294, and 301–302 (NY). A helical membrane pass occupies residues 275–297 (PIWGKPPVVVGGKLLVSGYWGIA). The helical transmembrane segment at 317–336 (GISSPVPYFYPIYLLILLIW) threads the bilayer. NADP(+)-binding positions include aspartate 341, 345 to 349 (CAEKY), and tyrosine 356.

This sequence belongs to the ERG4/ERG24 family.

It is found in the membrane. It catalyses the reaction 4,4-dimethyl-5alpha-cholesta-8,24-dien-3beta-ol + NADP(+) = 4,4-dimethyl-5alpha-cholesta-8,14,24-trien-3beta-ol + NADPH + H(+). The protein operates within steroid biosynthesis; zymosterol biosynthesis; zymosterol from lanosterol: step 2/6. Its function is as follows. Reduces the C14=C15 double bond of 4,4-dimethyl-cholesta-8,14,24-trienol to produce 4,4-dimethyl-cholesta-8,24-dienol. Required for cell division and expansion and is involved in proper organization of the embryo. This is Delta(14)-sterol reductase (FK) from Arabidopsis thaliana (Mouse-ear cress).